Reading from the N-terminus, the 197-residue chain is Holliday junction branch migration complex subunit RuvA (197 aa).

The interval methionine 1–arginine 63 is domain I. Residues serine 64–valine 142 are domain II. Positions alanine 143–serine 147 are flexible linker. Positions alanine 148–lysine 197 are domain III.

The protein belongs to the RuvA family. Homotetramer. Forms an RuvA(8)-RuvB(12)-Holliday junction (HJ) complex. HJ DNA is sandwiched between 2 RuvA tetramers; dsDNA enters through RuvA and exits via RuvB. An RuvB hexamer assembles on each DNA strand where it exits the tetramer. Each RuvB hexamer is contacted by two RuvA subunits (via domain III) on 2 adjacent RuvB subunits; this complex drives branch migration. In the full resolvosome a probable DNA-RuvA(4)-RuvB(12)-RuvC(2) complex forms which resolves the HJ.

The protein resides in the cytoplasm. Functionally, the RuvA-RuvB-RuvC complex processes Holliday junction (HJ) DNA during genetic recombination and DNA repair, while the RuvA-RuvB complex plays an important role in the rescue of blocked DNA replication forks via replication fork reversal (RFR). RuvA specifically binds to HJ cruciform DNA, conferring on it an open structure. The RuvB hexamer acts as an ATP-dependent pump, pulling dsDNA into and through the RuvAB complex. HJ branch migration allows RuvC to scan DNA until it finds its consensus sequence, where it cleaves and resolves the cruciform DNA. This chain is Holliday junction branch migration complex subunit RuvA, found in Streptococcus pneumoniae (strain Hungary19A-6).